The following is a 122-amino-acid chain: LOB domain-containing protein 5 (122 aa).

An LOB domain is found at R8 to I109.

The protein belongs to the LOB domain-containing protein family.

This is LOB domain-containing protein 5 (LBD5) from Arabidopsis thaliana (Mouse-ear cress).